Reading from the N-terminus, the 207-residue chain is Fibroblast growth factor 18 (207 aa).

Residues Met1–Ala27 form the signal peptide. The N-linked (GlcNAc...) asparagine glycan is linked to Asn39. An intrachain disulfide couples Cys109 to Cys127. N-linked (GlcNAc...) asparagine glycosylation is present at Asn137. The tract at residues Gly157–Gln186 is disordered. A compositionally biased stretch (basic and acidic residues) spans Lys164–Phe174.

The protein belongs to the heparin-binding growth factors family. As to quaternary structure, interacts with FGFR3 and FGFR4.

It localises to the secreted. Its function is as follows. Plays an important role in the regulation of cell proliferation, cell differentiation and cell migration. Required for normal ossification and bone development. Stimulates hepatic and intestinal proliferation. The chain is Fibroblast growth factor 18 (FGF18) from Homo sapiens (Human).